Consider the following 399-residue polypeptide: MKILVINCGSSSLKYQLLDMDTQTPIAKGLVERIGLPGAVLTHRPADGEKEIITAEIPNHTIAIQLVLDALVNPEYGVVKSLEEIGSVGHRVVHGGEKFASSVLITDEVMQAIEECIELAPLHNPPNIAGIEACQKLMPGVPQVAVFDTAFHQTMPPHAYLYGLPYEFYEKYKIRKYGFHGTSHKYVSQRAAKLLNRPAEGLKLISCHLGNGSSITAIKDGKSIETSMGFTPLEGLMMGTRSGDLDPAIVSFIQQKENLSSDEVNDFLNKKCGVLGLSGVSSDFRDIEQARDQGNYRAALALDVFSHDVKKYIGSYAAVLNGADAIIFTAGLGENSAEMREAVVDGLQYLGAKLDLEKNKVRGKEADISAPEATCRVLVIPTNEELMIALDTLDIIQKG.

N7 serves as a coordination point for Mg(2+). Position 14 (K14) interacts with ATP. Position 91 (R91) interacts with substrate. D148 (proton donor/acceptor) is an active-site residue. Residues 208-212 (HLGNG), 283-285 (DFR), and 331-335 (GLGEN) each bind ATP. E384 is a Mg(2+) binding site.

This sequence belongs to the acetokinase family. In terms of assembly, homodimer. The cofactor is Mg(2+). It depends on Mn(2+) as a cofactor.

Its subcellular location is the cytoplasm. The catalysed reaction is acetate + ATP = acetyl phosphate + ADP. The protein operates within metabolic intermediate biosynthesis; acetyl-CoA biosynthesis; acetyl-CoA from acetate: step 1/2. Functionally, catalyzes the formation of acetyl phosphate from acetate and ATP. Can also catalyze the reverse reaction. This is Acetate kinase from Desulfitobacterium hafniense (strain Y51).